Here is a 417-residue protein sequence, read N- to C-terminus: S-inosyl-L-homocysteine hydrolase (417 aa).

Residues Asp-124 and Glu-149 each contribute to the substrate site. 150 to 152 contributes to the NAD(+) binding site; the sequence is TTT. Substrate is bound by residues Lys-179 and Asp-183. NAD(+)-binding positions include Asn-184, 213-218, Glu-236, Asn-271, 292-294, and Asn-339; these read GYGWCG and SGH.

It belongs to the adenosylhomocysteinase family. NAD(+) is required as a cofactor.

It localises to the cytoplasm. The enzyme catalyses S-inosyl-L-homocysteine + H2O = L-homocysteine + inosine. The protein operates within amino-acid biosynthesis; S-adenosyl-L-methionine biosynthesis. Its function is as follows. Catalyzes the hydrolysis of S-inosyl-L-homocysteine (SIH) to L-homocysteine (Hcy) and inosine. Likely functions in a S-adenosyl-L-methionine (SAM) recycling pathway from S-adenosyl-L-homocysteine (SAH) produced from SAM-dependent methylation reactions. Can also catalyze the reverse reaction in vitro, i.e. the synthesis of SIH from Hcy and inosine. The sequence is that of S-inosyl-L-homocysteine hydrolase from Methanothermobacter thermautotrophicus (strain ATCC 29096 / DSM 1053 / JCM 10044 / NBRC 100330 / Delta H) (Methanobacterium thermoautotrophicum).